A 325-amino-acid chain; its full sequence is Tetraacyldisaccharide 4'-kinase (325 aa).

Valine 51 to threonine 58 is an ATP binding site.

The protein belongs to the LpxK family.

The enzyme catalyses a lipid A disaccharide + ATP = a lipid IVA + ADP + H(+). It participates in glycolipid biosynthesis; lipid IV(A) biosynthesis; lipid IV(A) from (3R)-3-hydroxytetradecanoyl-[acyl-carrier-protein] and UDP-N-acetyl-alpha-D-glucosamine: step 6/6. Transfers the gamma-phosphate of ATP to the 4'-position of a tetraacyldisaccharide 1-phosphate intermediate (termed DS-1-P) to form tetraacyldisaccharide 1,4'-bis-phosphate (lipid IVA). In Paramagnetospirillum magneticum (strain ATCC 700264 / AMB-1) (Magnetospirillum magneticum), this protein is Tetraacyldisaccharide 4'-kinase.